The sequence spans 369 residues: DNA replication and repair protein RecF (369 aa).

ATP is bound at residue 30–37 (GDNGSGKT).

It belongs to the RecF family.

It is found in the cytoplasm. Functionally, the RecF protein is involved in DNA metabolism; it is required for DNA replication and normal SOS inducibility. RecF binds preferentially to single-stranded, linear DNA. It also seems to bind ATP. This chain is DNA replication and repair protein RecF, found in Pseudomonas paraeruginosa (strain DSM 24068 / PA7) (Pseudomonas aeruginosa (strain PA7)).